The following is a 49-amino-acid chain: Large ribosomal subunit protein bL33 (49 aa).

This sequence belongs to the bacterial ribosomal protein bL33 family.

The protein is Large ribosomal subunit protein bL33 (rpmG) of Thermotoga maritima (strain ATCC 43589 / DSM 3109 / JCM 10099 / NBRC 100826 / MSB8).